Reading from the N-terminus, the 423-residue chain is AP-1 complex subunit mu-2 (423 aa).

One can recognise an MHD domain in the interval 168–421 (KNEVFIDVIE…ITQSGDYQLR (254 aa)).

It belongs to the adaptor complexes medium subunit family. Adaptor protein complex 1 (AP-1) is a heterotetramer composed of two large adaptins (gamma-type subunit AP1G1 and beta-type subunit AP1B1), a medium adaptin (mu-type subunit AP1M1 or AP1M2) and a small adaptin (sigma-type subunit AP1S1 or AP1S2 or AP1S3). Interacts with P2X4. In terms of processing, phosphorylation of membrane-bound AP1M1/AP1M2 increases its affinity for sorting signals.

It is found in the golgi apparatus. The protein resides in the cytoplasmic vesicle. The protein localises to the clathrin-coated vesicle membrane. Its function is as follows. Subunit of clathrin-associated adaptor protein complex 1 that plays a role in protein sorting in the trans-Golgi network (TGN) and endosomes. The AP complexes mediate the recruitment of clathrin to membranes and the recognition of sorting signals within the cytosolic tails of transmembrane cargo molecules. The sequence is that of AP-1 complex subunit mu-2 (AP1M2) from Homo sapiens (Human).